The sequence spans 728 residues: Sodium-dependent transporter snf-5 (728 aa).

At 1 to 84 (MADSGSNEEA…PEEEEEKRDG (84 aa)) the chain is on the cytoplasmic side. Residues 1–84 (MADSGSNEEA…PEEEEEKRDG (84 aa)) are disordered. Composition is skewed to low complexity over residues 29 to 50 (QQVSQQSNQLSSQKSIQQSTQS) and 60 to 73 (KNTTVTTTRPTLDT). The chain crosses the membrane as a helical span at residues 85 to 105 (FGNSFEFVLTSLGLAVGLGNI). Residues Gly97, Ala99, Val100, and Asn104 each coordinate Na(+). Over 106-119 (WRFPTRAYNNGGSA) the chain is Extracellular. Residues 120 to 140 (FLIPYLTCAFLFGLPAVYFEF) traverse the membrane as a helical segment. Residues 141-162 (LTGQYQGKSPPVIFRRVRPILE) lie on the Cytoplasmic side of the membrane. The chain crosses the membrane as a helical span at residues 163 to 183 (GVGWMGVFVAALVAIYYIVIV). At 184–285 (SWISIYMINI…PSSGMLDFGG (102 aa)) the chain is on the extracellular side. An intrachain disulfide couples Cys204 to Cys214. N-linked (GlcNAc...) asparagine glycosylation is found at Asn210, Asn225, Asn232, Asn237, and Asn257. The chain crosses the membrane as a helical span at residues 286–306 (FNWPVFAAMSVCWLLTGLGIL). Topologically, residues 307-314 (KGAKIMGK) are cytoplasmic. A helical transmembrane segment spans residues 315 to 335 (ISYVSVLVPYVLVVVLFINGV). The Extracellular portion of the chain corresponds to 336 to 364 (FQDGSGVGLEMYFGTPNYTKLYEQDTWTE). Asn352 carries N-linked (GlcNAc...) asparagine glycosylation. A helical membrane pass occupies residues 365–386 (ALKQLCFSLSVGHGGLISLSSY). Ser372 serves as a coordination point for Na(+). Residues 387–396 (SPKRNNIFRD) are Cytoplasmic-facing. Residues 397–417 (ALIVIIGDTTMSLVGGGAVFA) traverse the membrane as a helical segment. The Extracellular segment spans residues 418–451 (TLGYLAKATGQDVKDVVKSGLSLAFVVYPEAMTR). Residues 452 to 472 (MPVPWLWCFIFFLMLFLLGAS) form a helical membrane-spanning segment. Residue Leu469 coordinates Na(+). Topologically, residues 473–495 (TEIALVDVFCSCIYDQYPRFRNR) are cytoplasmic. A helical transmembrane segment spans residues 496 to 516 (KWIVVIAWCSVLYCIGLVFST). Residues 517-531 (RAGYYWFEMFDEYAA) are Extracellular-facing. Residues 532-552 (GFSSVCTVVCELLVMMYIYGF) traverse the membrane as a helical segment. Over 553–578 (RNVRDDITEVVGHARNKFTGAIGAHS) the chain is Cytoplasmic. A helical transmembrane segment spans residues 579–599 (WYFTANWMVISPSIALILVGL). Topologically, residues 600-616 (SFVREYPYMGRHDIYPA) are extracellular. Residues 617 to 637 (VFDIFGWFLSFLPVIIVPIFM) form a helical membrane-spanning segment. Residues 638–728 (LLNFIRCRNR…DTSSTYHQVY (91 aa)) lie on the Cytoplasmic side of the membrane. Residues 687-699 (PWDEENVDLTDSE) show a composition bias toward acidic residues. The interval 687–728 (PWDEENVDLTDSESESRNAASGDVPIDDVATIDTSSTYHQVY) is disordered. Residues 718 to 728 (IDTSSTYHQVY) show a composition bias toward polar residues.

Belongs to the sodium:neurotransmitter symporter (SNF) (TC 2.A.22) family. As to expression, expressed in the INT-9 cells and posterior cells of the alimentary canal of the intestine, gut epithelial cells, the pharynx of some worms, two cells of the rectal gland, and in DVA, DVB and DVC neurons and amphid sensory neurons ASI, ADF and ASK neurons.

The protein resides in the cell membrane. Its function is as follows. Sodium-dependent amino acid transporter that mediates the uptake of the L-enantiomers of various amino acids, including L-proline and L-methionine, and also of acidic amino acids such as L-glutamic acid and L-aspartic acid. May additionally have a role in potassium-dependent amino acid absorption. In response to the availability of amino acid nutrients, may play a role in dauer formation. May play a role in promoting fertility. The protein is Sodium-dependent transporter snf-5 of Caenorhabditis elegans.